The sequence spans 453 residues: Allantoinase (453 aa).

Zn(2+)-binding residues include H59, H61, K146, H186, H242, and D315. K146 bears the N6-carboxylysine mark.

This sequence belongs to the metallo-dependent hydrolases superfamily. Allantoinase family. In terms of assembly, homotetramer. Requires Zn(2+) as cofactor. Post-translationally, carboxylation allows a single lysine to coordinate two zinc ions.

It catalyses the reaction (S)-allantoin + H2O = allantoate + H(+). It participates in nitrogen metabolism; (S)-allantoin degradation; allantoate from (S)-allantoin: step 1/1. Its function is as follows. Catalyzes the conversion of allantoin (5-ureidohydantoin) to allantoic acid by hydrolytic cleavage of the five-member hydantoin ring. The polypeptide is Allantoinase (Escherichia coli (strain 55989 / EAEC)).